The chain runs to 453 residues: uncharacterized protein (453 aa).

2 disordered regions span residues 183–210 and 428–453; these read GNGRSNPSKNNERGRTKAHNYKTRRSLS and PDSMQHPPTFSKNNTSSNPKSHQYSK. The span at 198–207 shows a compositional bias: basic residues; that stretch reads TKAHNYKTRR. Residues 433–453 are compositionally biased toward polar residues; the sequence is HPPTFSKNNTSSNPKSHQYSK.

This is an uncharacterized protein from Saccharomyces cerevisiae (strain ATCC 204508 / S288c) (Baker's yeast).